A 67-amino-acid polypeptide reads, in one-letter code: ATP synthase F(0) complex subunit 8 (67 aa).

Residues 8–24 (TWFTTIVAMILSLFILM) form a helical membrane-spanning segment. Lys-54 bears the N6-acetyllysine; alternate mark. Residue Lys-54 is modified to N6-succinyllysine; alternate. Residue Lys-57 is modified to N6-acetyllysine.

This sequence belongs to the ATPase protein 8 family. Component of the ATP synthase complex composed at least of ATP5F1A/subunit alpha, ATP5F1B/subunit beta, ATP5MC1/subunit c (homooctomer), MT-ATP6/subunit a, MT-ATP8/subunit 8, ATP5ME/subunit e, ATP5MF/subunit f, ATP5MG/subunit g, ATP5MK/subunit k, ATP5MJ/subunit j, ATP5F1C/subunit gamma, ATP5F1D/subunit delta, ATP5F1E/subunit epsilon, ATP5PF/subunit F6, ATP5PB/subunit b, ATP5PD/subunit d, ATP5PO/subunit OSCP. ATP synthase complex consists of a soluble F(1) head domain (subunits alpha(3) and beta(3)) - the catalytic core - and a membrane F(0) domain - the membrane proton channel (subunits c, a, 8, e, f, g, k and j). These two domains are linked by a central stalk (subunits gamma, delta, and epsilon) rotating inside the F1 region and a stationary peripheral stalk (subunits F6, b, d, and OSCP). Interacts with PRICKLE3.

It localises to the mitochondrion membrane. Its function is as follows. Subunit 8, of the mitochondrial membrane ATP synthase complex (F(1)F(0) ATP synthase or Complex V) that produces ATP from ADP in the presence of a proton gradient across the membrane which is generated by electron transport complexes of the respiratory chain. ATP synthase complex consist of a soluble F(1) head domain - the catalytic core - and a membrane F(1) domain - the membrane proton channel. These two domains are linked by a central stalk rotating inside the F(1) region and a stationary peripheral stalk. During catalysis, ATP synthesis in the catalytic domain of F(1) is coupled via a rotary mechanism of the central stalk subunits to proton translocation. In vivo, can only synthesize ATP although its ATP hydrolase activity can be activated artificially in vitro. Part of the complex F(0) domain. The protein is ATP synthase F(0) complex subunit 8 of Oryctolagus cuniculus (Rabbit).